The sequence spans 155 residues: Small ribosomal subunit protein uS7 (155 aa).

This sequence belongs to the universal ribosomal protein uS7 family. Part of the 30S ribosomal subunit. Contacts proteins S9 and S11.

One of the primary rRNA binding proteins, it binds directly to 16S rRNA where it nucleates assembly of the head domain of the 30S subunit. Is located at the subunit interface close to the decoding center, probably blocks exit of the E-site tRNA. The chain is Small ribosomal subunit protein uS7 from Thioalkalivibrio sulfidiphilus (strain HL-EbGR7).